An 84-amino-acid chain; its full sequence is Putative ribosomal RNA large subunit methyltransferase H 2 (84 aa).

S-adenosyl-L-methionine-binding positions include Gly33 and 52-57 (FSKMTF).

This sequence belongs to the RNA methyltransferase RlmH family. As to quaternary structure, homodimer.

The protein resides in the cytoplasm. It catalyses the reaction pseudouridine(1915) in 23S rRNA + S-adenosyl-L-methionine = N(3)-methylpseudouridine(1915) in 23S rRNA + S-adenosyl-L-homocysteine + H(+). Specifically methylates the pseudouridine at position 1915 (m3Psi1915) in 23S rRNA. The sequence is that of Putative ribosomal RNA large subunit methyltransferase H 2 (rlmH2) from Clostridium perfringens (strain SM101 / Type A).